Reading from the N-terminus, the 167-residue chain is Small ribosomal subunit protein uS5 (167 aa).

The region spanning 12-75 (LQEKLVQVNR…EAARRNMIQV (64 aa)) is the S5 DRBM domain.

This sequence belongs to the universal ribosomal protein uS5 family. Part of the 30S ribosomal subunit. Contacts proteins S4 and S8.

Its function is as follows. With S4 and S12 plays an important role in translational accuracy. Functionally, located at the back of the 30S subunit body where it stabilizes the conformation of the head with respect to the body. This chain is Small ribosomal subunit protein uS5, found in Alcanivorax borkumensis (strain ATCC 700651 / DSM 11573 / NCIMB 13689 / SK2).